Consider the following 419-residue polypeptide: Voltage-gated potassium channel subunit beta-1 (419 aa).

Residues 1–51 are disordered; it reads MLAARTGAAGSQIAEESSKLRKQAAFSGGSKDRSPKKASENVKDSSLSPSG. The segment covering 30–43 has biased composition (basic and acidic residues); it reads SKDRSPKKASENVK. NADP(+) is bound by residues Thr108, Trp109, Gln115, and Asp137. Tyr142 functions as the Proton donor/acceptor in the catalytic mechanism. Residues Asn210, Ser240, Arg241, Gln266, Trp295, Ser296, Pro297, Leu298, Ala299, Cys300, Lys306, Arg316, Gly375, Ser377, Gln381, Glu384, and Asn385 each coordinate NADP(+).

It belongs to the shaker potassium channel beta subunit family. Homotetramer. Interaction with tetrameric potassium channel alpha subunits gives rise to a heterooctamer. Identified in potassium channel complexes containing KCNA1, KCNA2, KCNA4, KCNA5, KCNA6, KCNAB1 and KCNAB2. Part of a complex containing KCNA1, KCNA4 and LGI1; interaction with LGI1 inhibits down-regulation of KCNA1 channel activity. Interacts with the dimer formed by GNB1 and GNG2; this enhances KCNA1 binding. Interacts with SQSTM1. Detected in portal vein myocytes (at protein level).

The protein resides in the cytoplasm. It localises to the membrane. It is found in the cell membrane. The catalysed reaction is a primary alcohol + NADP(+) = an aldehyde + NADPH + H(+). It catalyses the reaction a secondary alcohol + NADP(+) = a ketone + NADPH + H(+). Functionally, regulatory subunit of the voltage-gated potassium (Kv) channels composed of pore-forming and potassium-conducting alpha subunits and of regulatory beta subunits. The beta-1/KCNAB1 cytoplasmic subunit mediates closure of delayed rectifier potassium channels by physically obstructing the pore via its N-terminal domain and increases the speed of channel closure for other family members. Promotes the inactivation of KCNA1, KCNA2, KCNA4, KCNA5 and KCNA6 alpha subunit-containing channels. Displays nicotinamide adenine dinucleotide phosphate (NADPH)-dependent aldoketoreductase activity by catalyzing the NADPH-dependent reduction of a variety of endogenous aldehydes and ketones. The binding of NADPH is required for efficient down-regulation of potassium channel activity. Oxidation of the bound NADPH restrains N-terminal domain from blocking the channel, thereby decreasing N-type inactivation of potassium channel activity. The chain is Voltage-gated potassium channel subunit beta-1 (KCNAB1) from Oryctolagus cuniculus (Rabbit).